The following is a 326-amino-acid chain: GTP 3',8-cyclase (326 aa).

The region spanning 5-227 (GHGRTVDYLR…ALGREGASPS (223 aa)) is the Radical SAM core domain. Residue arginine 14 coordinates GTP. [4Fe-4S] cluster-binding residues include cysteine 21 and cysteine 25. An S-adenosyl-L-methionine-binding site is contributed by tyrosine 27. Residue cysteine 28 coordinates [4Fe-4S] cluster. Arginine 64 contributes to the GTP binding site. Glycine 68 contacts S-adenosyl-L-methionine. Residue threonine 95 coordinates GTP. Serine 119 provides a ligand contact to S-adenosyl-L-methionine. Lysine 155 lines the GTP pocket. An S-adenosyl-L-methionine-binding site is contributed by methionine 189. Positions 250 and 253 each coordinate [4Fe-4S] cluster. 255-257 (RIR) serves as a coordination point for GTP. Cysteine 267 provides a ligand contact to [4Fe-4S] cluster.

Belongs to the radical SAM superfamily. MoaA family. As to quaternary structure, monomer and homodimer. [4Fe-4S] cluster serves as cofactor.

It catalyses the reaction GTP + AH2 + S-adenosyl-L-methionine = (8S)-3',8-cyclo-7,8-dihydroguanosine 5'-triphosphate + 5'-deoxyadenosine + L-methionine + A + H(+). It participates in cofactor biosynthesis; molybdopterin biosynthesis. In terms of biological role, catalyzes the cyclization of GTP to (8S)-3',8-cyclo-7,8-dihydroguanosine 5'-triphosphate. This is GTP 3',8-cyclase from Sulfurovum sp. (strain NBC37-1).